We begin with the raw amino-acid sequence, 103 residues long: Large ribosomal subunit protein uL24 (103 aa).

It belongs to the universal ribosomal protein uL24 family. As to quaternary structure, part of the 50S ribosomal subunit.

In terms of biological role, one of two assembly initiator proteins, it binds directly to the 5'-end of the 23S rRNA, where it nucleates assembly of the 50S subunit. One of the proteins that surrounds the polypeptide exit tunnel on the outside of the subunit. This is Large ribosomal subunit protein uL24 from Brucella abortus (strain S19).